The following is a 509-amino-acid chain: Dihydrolipoyl dehydrogenase, mitochondrial (509 aa).

A mitochondrion-targeting transit peptide spans 1–35 (MQSWSRVYRSLAKKGHFNRISHGLQGVSSVPLRTY). Lys66 carries the N6-acetyllysine; alternate modification. Position 66 is an N6-succinyllysine; alternate (Lys66). FAD contacts are provided by residues 71-80 (EKNETLGGTC) and Lys89. A disulfide bond links Cys80 and Cys85. Residues Lys104, Lys122, Lys132, and Lys143 each carry the N6-acetyllysine; alternate modification. An N6-succinyllysine; alternate mark is found at Lys104, Lys122, Lys132, and Lys143. Gly154 lines the FAD pocket. Lys159 and Lys166 each carry N6-succinyllysine. 183–185 (TGS) is an FAD binding site. NAD(+)-binding positions include 220–227 (GAGVIGVE) and Glu243. An N6-succinyllysine mark is found at Lys273 and Lys277. Val278 is a binding site for NAD(+). Residues Ser285 and Ser297 each carry the phosphoserine modification. Gly314 contacts NAD(+). Position 334 is an N6-acetyllysine; alternate (Lys334). The residue at position 334 (Lys334) is an N6-succinyllysine; alternate. The residue at position 346 (Lys346) is an N6-acetyllysine. Residues Asp355 and 361 to 364 (MLAH) each bind FAD. Residue Lys410 is modified to N6-acetyllysine; alternate. Lys410 bears the N6-succinyllysine; alternate mark. Residues Lys417 and Lys420 each carry the N6-acetyllysine modification. Lys430 bears the N6-succinyllysine mark. His487 (proton acceptor) is an active-site residue. Lys505 carries the post-translational modification N6-acetyllysine; alternate. At Lys505 the chain carries N6-succinyllysine; alternate.

It belongs to the class-I pyridine nucleotide-disulfide oxidoreductase family. As to quaternary structure, homodimer. Part of the multimeric pyruvate dehydrogenase complex that contains multiple copies of pyruvate dehydrogenase (subunits PDHA (PDHA1 or PDHA2) and PDHB, E1), dihydrolipoamide acetyltransferase (DLAT, E2) and lipoamide dehydrogenase (DLD, E3). These subunits are bound to an inner core composed of about 48 DLAT and 12 PDHX molecules (by non covalent bonds). The 2-oxoglutarate dehydrogenase complex is composed of OGDH (2-oxoglutarate dehydrogenase; E1), DLST (dihydrolipoamide succinyltransferase; E2), DLD (dihydrolipoamide dehydrogenase; E3) and the assembly factor KGD4. It contains multiple copies of the three enzymatic components (E1, E2 and E3). In the nucleus, the 2-oxoglutarate dehydrogenase complex associates with KAT2A. Interacts with PDHX. FAD serves as cofactor. Post-translationally, tyrosine phosphorylated. Expressed in liver (at protein level).

The protein localises to the mitochondrion matrix. Its subcellular location is the nucleus. It localises to the cell projection. It is found in the cilium. The protein resides in the flagellum. The protein localises to the cytoplasmic vesicle. Its subcellular location is the secretory vesicle. It localises to the acrosome. It carries out the reaction N(6)-[(R)-dihydrolipoyl]-L-lysyl-[protein] + NAD(+) = N(6)-[(R)-lipoyl]-L-lysyl-[protein] + NADH + H(+). Lipoamide dehydrogenase is a component of the glycine cleavage system as well as an E3 component of three alpha-ketoacid dehydrogenase complexes (pyruvate-, alpha-ketoglutarate-, and branched-chain amino acid-dehydrogenase complex). The 2-oxoglutarate dehydrogenase complex is mainly active in the mitochondrion. A fraction of the 2-oxoglutarate dehydrogenase complex also localizes in the nucleus and is required for lysine succinylation of histones: associates with KAT2A on chromatin and provides succinyl-CoA to histone succinyltransferase KAT2A. In monomeric form may have additional moonlighting function as serine protease. Involved in the hyperactivation of spermatazoa during capacitation and in the spermatazoal acrosome reaction. In Mus musculus (Mouse), this protein is Dihydrolipoyl dehydrogenase, mitochondrial (Dld).